Reading from the N-terminus, the 97-residue chain is Eotaxin (97 aa).

A signal peptide spans 1 to 23; the sequence is MQLSTALLFLLLTATSFTSQVLA. 2 disulfide bridges follow: Cys-32-Cys-57 and Cys-33-Cys-73. Thr-94 is a glycosylation site (O-linked (GalNAc...) threonine).

Belongs to the intercrine beta (chemokine CC) family.

The protein localises to the secreted. In response to the presence of allergens, this protein directly promotes the accumulation of eosinophils (a prominent feature of allergic inflammatory reactions), but not lymphocytes, macrophages or neutrophils. Binds to CCR3. The polypeptide is Eotaxin (Ccl11) (Rattus norvegicus (Rat)).